The chain runs to 193 residues: UPF0301 protein SAV_5129 (193 aa).

Belongs to the UPF0301 (AlgH) family.

The chain is UPF0301 protein SAV_5129 from Streptomyces avermitilis (strain ATCC 31267 / DSM 46492 / JCM 5070 / NBRC 14893 / NCIMB 12804 / NRRL 8165 / MA-4680).